A 451-amino-acid polypeptide reads, in one-letter code: Protein tweety homolog 1-B (451 aa).

The Extracellular segment spans residues 1–43; that stretch reads MSTSHGYRASWWTYILHQVPHTNFQFEVVDNQFAPQEWSYQQA. A helical transmembrane segment spans residues 44–64; sequence LLFLASIAGLCLAISLVLICV. Residues 65-86 lie on the Cytoplasmic side of the membrane; that stretch reads YLIKFCCCASQEDDDSKSHRVC. A helical transmembrane segment spans residues 87-107; that stretch reads CVTWSCVAAVIICCAGIGIGF. Topologically, residues 108–214 are extracellular; the sequence is YGNSETNDGV…QVNFIEDYRW (107 aa). An N-linked (GlcNAc...) asparagine glycan is attached at Asn128. The helical transmembrane segment at 215-235 threads the bilayer; it reads LAYILLLLLDLIICLFTLLSL. Residues 236–240 lie on the Cytoplasmic side of the membrane; sequence AKQIK. The helical transmembrane segment at 241–261 threads the bilayer; that stretch reads WLVIVMTVVSFFVLLLSWGSM. The Extracellular portion of the chain corresponds to 262–390; it reads GLEMATAVGL…LKGLCYDGME (129 aa). 2 cysteine pairs are disulfide-bonded: Cys275–Cys385 and Cys303–Cys370. N-linked (GlcNAc...) asparagine glycosylation is found at Asn284 and Asn355. Residues 391–411 traverse the membrane as a helical segment; that stretch reads GILFLLLFSFLSALSFTAAVC. Over 412–451 the chain is Cytoplasmic; it reads SLPRAWKRFRNRDLDYDDMDEDDPFNPQESKRFVQWQSSI.

This sequence belongs to the tweety family. Homotetramer; disulfide-linked. Homodimer.

It is found in the cell membrane. It catalyses the reaction chloride(in) = chloride(out). The catalysed reaction is L-glutamate(out) = L-glutamate(in). Its function is as follows. May act as a calcium-independent, swelling-dependent volume-regulated anion channel (VRAC-swell) which plays a pivotal role in the process of regulatory volume decrease (RVD) in the brain through the efflux of anions like chloride and organic osmolytes like glutamate. This is Protein tweety homolog 1-B (ttyh1-b) from Xenopus laevis (African clawed frog).